The primary structure comprises 762 residues: Molybdenum cofactor sulfurase 2 (762 aa).

Lys234 carries the N6-(pyridoxal phosphate)lysine modification. Cys400 is a catalytic residue. Positions 590–738 (AWISKALRMP…LECGSILEPV (149 aa)) constitute an MOSC domain.

It belongs to the class-V pyridoxal-phosphate-dependent aminotransferase family. MOCOS subfamily. Pyridoxal 5'-phosphate serves as cofactor.

It catalyses the reaction Mo-molybdopterin + L-cysteine + AH2 = thio-Mo-molybdopterin + L-alanine + A + H2O. Its function is as follows. Sulfurates the molybdenum cofactor. Sulfation of molybdenum is essential for xanthine dehydrogenase (XDH) and aldehyde oxidase (ADO) enzymes in which molybdenum cofactor is liganded by 1 oxygen and 1 sulfur atom in active form. In Aedes aegypti (Yellowfever mosquito), this protein is Molybdenum cofactor sulfurase 2.